The primary structure comprises 645 residues: MSNMDFLPISKEDLKKRNIDVLDFIIVTGDAYVDHPSFGTAIIGRVLEREGFTVGIIAQPNWNNIEDFKKLGKPKYGFLVNSGNIDSMVNHYTASKKKRHDDFYSPGGKSGYRPDRAVIVYCNKIKEAFKDSPIIIGGIEASLRRFAHYDYWDNSVRRSILEDSSADLLIYGMGEKPIVQVSNLLRYGMKIDSIKNVRGTTYIEKDISSLKDYIEIPSFEEVSTNKKSYAEAYKIQYYEQDSIRGKTLVQKHKERYVVQNPPQPPLSQEEMDEVYALPYARTYHPMYEAEGGIPAIKEVKFSITSHRGCYGSCSFCALTFHQGRVIQNRSQDSILKEANMMTNMKDFKGYIHDVGGPTANFRHRACKVQEKHGTCKNKQCVFPKACKNLIVDHKEYLSLLRKIRKIPNVKKVFIRSGIRFDYLMYDKNDEFFKELCEHHISGQLKVAPEHISDKVLNLMGKPTRNVYDSFVKKYYDINKKIHKNQFLVPYLMSSHPGSDLKAAIELAQYIKKMGYTPEQVQDFYPTPGSLSTTMYYTGINPLTEEKVYIPKDQKEKRMQRALLQFSIHDNYDLVKEALIKAHREDLIGNGPDCLIPYNKPYKKSHKKNNAKNNNNHYNKNNNYNKNKDISKKNKKNSLSKHKKRK.

One can recognise a Radical SAM core domain in the interval 295 to 566 (AIKEVKFSIT…RMQRALLQFS (272 aa)). [4Fe-4S] cluster-binding residues include Cys-309, Cys-313, and Cys-316. The segment at 598-645 (NKPYKKSHKKNNAKNNNNHYNKNNNYNKNKDISKKNKKNSLSKHKKRK) is disordered. Residues 600 to 609 (PYKKSHKKNN) are compositionally biased toward basic residues. The span at 610–624 (AKNNNNHYNKNNNYN) shows a compositional bias: low complexity. Over residues 632–645 (KNKKNSLSKHKKRK) the composition is skewed to basic residues.

This sequence belongs to the UPF0313 family. It depends on [4Fe-4S] cluster as a cofactor.

The polypeptide is UPF0313 protein CLM_0251 (Clostridium botulinum (strain Kyoto / Type A2)).